The sequence spans 331 residues: Vitamin B12 import system permease protein BtuC (331 aa).

7 helical membrane passes run 21 to 43, 63 to 85, 90 to 112, 116 to 138, 151 to 173, 193 to 210, and 239 to 261; these read LALL…ERWI, PRTL…MQAV, LAEP…TVLL, LLPV…FLLL, LLIG…YFST, WRHG…LWLS, and VLVL…IAFI.

Belongs to the binding-protein-dependent transport system permease family. FecCD subfamily. In terms of assembly, the complex is composed of two ATP-binding proteins (BtuD), two transmembrane proteins (BtuC) and a solute-binding protein (BtuF).

The protein resides in the cell inner membrane. Functionally, part of the ABC transporter complex BtuCDF involved in vitamin B12 import. Involved in the translocation of the substrate across the membrane. The chain is Vitamin B12 import system permease protein BtuC from Pectobacterium atrosepticum (strain SCRI 1043 / ATCC BAA-672) (Erwinia carotovora subsp. atroseptica).